A 348-amino-acid polypeptide reads, in one-letter code: NADH-ubiquinone oxidoreductase chain 2 (348 aa).

10 consecutive transmembrane segments (helical) span residues 3–23, 24–44, 60–80, 95–115, 136–156, 177–197, 198–218, 239–259, 273–293, and 325–345; these read PFIL…TFAS, SHWL…IPLM, FITQ…NAWI, ASML…HFWL, LAPF…ITFL, ILAY…QFNQ, QLAL…FMIF, LTAI…LSGF, DIPL…YFYL, and LAIS…TLAL.

This sequence belongs to the complex I subunit 2 family.

The protein resides in the mitochondrion inner membrane. It carries out the reaction a ubiquinone + NADH + 5 H(+)(in) = a ubiquinol + NAD(+) + 4 H(+)(out). Core subunit of the mitochondrial membrane respiratory chain NADH dehydrogenase (Complex I) that is believed to belong to the minimal assembly required for catalysis. Complex I functions in the transfer of electrons from NADH to the respiratory chain. The immediate electron acceptor for the enzyme is believed to be ubiquinone. This is NADH-ubiquinone oxidoreductase chain 2 (MT-ND2) from Gadus morhua (Atlantic cod).